Consider the following 293-residue polypeptide: Peptidoglycan deacetylase (293 aa).

Zn(2+) contacts are provided by aspartate 14, histidine 86, and histidine 90. The region spanning 29 to 276 is the NodB homology domain; it reads PDDISRGLFA…INKHEGVRWV (248 aa).

Belongs to the polysaccharide deacetylase family. As to quaternary structure, homotetramer.

The enzyme catalyses Deacetylation of xylans and xylo-oligosaccharides.. Its function is as follows. Catalyzes the N-deacetylation of peptidoglycan (PG), an important mechanism that appears to confer lysozyme resistance and to mitigate host immune detection; this likely contributes to pathogen persistence in the host. The exact nature of the residue in PG that is deacetylated has not been determined. Is also able to catalyze the deacetylation of acetylated xylan, and, to a lesser extent, that of chitin and chitosan. Therefore, this enzyme might play a role during infection, considering that xylan-containing carbohydrate structures are among those commonly consumed by humans. In Helicobacter pylori (strain ATCC 700392 / 26695) (Campylobacter pylori), this protein is Peptidoglycan deacetylase (pgdA).